The following is a 333-amino-acid chain: Chemokine XC receptor 1 (333 aa).

The Extracellular portion of the chain corresponds to 1-31 (MESSGNPESTTFFYYDLQSQPCENQAWVFAT). The helical transmembrane segment at 32-59 (LATTVLYCLVFLLSLVGNSLVLWVLVKY) threads the bilayer. Residues 60–69 (ESLESLTNIF) are Cytoplasmic-facing. A helical transmembrane segment spans residues 70–89 (ILNLCLSDLVFACLLPVWIS). Residues 90 to 103 (PYHWGWVLGDFLCK) lie on the Extracellular side of the membrane. A disulfide bridge links Cys102 with Cys175. A helical transmembrane segment spans residues 104-125 (LLNMIFSISLYSSIFFLTIMTI). Over 126–142 (HRYLSVVSPLSTLRVPT) the chain is Cytoplasmic. Residues 143–167 (LRCRVLVTMAVWVASILSSILDTIF) form a helical membrane-spanning segment. At 168–190 (HKVLSSGCDYSELTWYLTSVYQH) the chain is on the extracellular side. A helical transmembrane segment spans residues 191–209 (NLFFLLSLGIILFCYVEIL). The Cytoplasmic segment spans residues 210 to 225 (RTLFRSRSKRRHRTVK). Residues 226-250 (LIFAIVVAYFLSWGPYNFTLFLQTL) form a helical membrane-spanning segment. Topologically, residues 251–267 (FRTQIIRSCEAKQQLEY) are extracellular. The helical transmembrane segment at 268 to 291 (ALLICRNLAFSHCCFNPVLYVFVG) threads the bilayer. The Cytoplasmic portion of the chain corresponds to 292–333 (VKFRTHLKHVLRQFWFCRLQAPSPASIPHSPGAFAYEGASFY).

It belongs to the G-protein coupled receptor 1 family.

The protein resides in the cell membrane. Its function is as follows. Receptor for chemokines SCYC1 and SCYC2. Subsequently transduces a signal by increasing the intracellular calcium ions level. Receptor for XCL1/Lymphotactin. This Homo sapiens (Human) protein is Chemokine XC receptor 1 (XCR1).